Here is a 404-residue protein sequence, read N- to C-terminus: 8-amino-7-oxononanoate synthase (404 aa).

Arginine 20 provides a ligand contact to substrate. 116 to 117 is a pyridoxal 5'-phosphate binding site; that stretch reads GY. Histidine 141 contacts substrate. Pyridoxal 5'-phosphate is bound by residues serine 187, histidine 215, and threonine 243. The residue at position 246 (lysine 246) is an N6-(pyridoxal phosphate)lysine. Residue threonine 366 coordinates substrate.

It belongs to the class-II pyridoxal-phosphate-dependent aminotransferase family. BioF subfamily. As to quaternary structure, homodimer. Requires pyridoxal 5'-phosphate as cofactor.

The enzyme catalyses 6-carboxyhexanoyl-[ACP] + L-alanine + H(+) = (8S)-8-amino-7-oxononanoate + holo-[ACP] + CO2. Its pathway is cofactor biosynthesis; biotin biosynthesis. Functionally, catalyzes the decarboxylative condensation of pimeloyl-[acyl-carrier protein] and L-alanine to produce 8-amino-7-oxononanoate (AON), [acyl-carrier protein], and carbon dioxide. This Cupriavidus taiwanensis (strain DSM 17343 / BCRC 17206 / CCUG 44338 / CIP 107171 / LMG 19424 / R1) (Ralstonia taiwanensis (strain LMG 19424)) protein is 8-amino-7-oxononanoate synthase.